We begin with the raw amino-acid sequence, 360 residues long: Peptide chain release factor 1 (360 aa).

Gln-235 is modified (N5-methylglutamine). Residues 284-295 show a composition bias toward basic and acidic residues; sequence ERQEQAQADTRR. The tract at residues 284 to 309 is disordered; the sequence is ERQEQAQADTRRNLLGSGDRSDKIRT.

It belongs to the prokaryotic/mitochondrial release factor family. In terms of processing, methylated by PrmC. Methylation increases the termination efficiency of RF1.

It localises to the cytoplasm. Peptide chain release factor 1 directs the termination of translation in response to the peptide chain termination codons UAG and UAA. The polypeptide is Peptide chain release factor 1 (prfA) (Pasteurella multocida (strain Pm70)).